A 79-amino-acid chain; its full sequence is Cytochrome b (79 aa).

Helical transmembrane passes span 1-7 (SALFLAM), 31-52 (WLIR…YLHI), and 67-79 (WNIG…LTMA). Residues His37 and His51 each coordinate heme b.

It belongs to the cytochrome b family. The cytochrome bc1 complex contains 11 subunits: 3 respiratory subunits (MT-CYB, CYC1 and UQCRFS1), 2 core proteins (UQCRC1 and UQCRC2) and 6 low-molecular weight proteins (UQCRH/QCR6, UQCRB/QCR7, UQCRQ/QCR8, UQCR10/QCR9, UQCR11/QCR10 and a cleavage product of UQCRFS1). This cytochrome bc1 complex then forms a dimer. The cofactor is heme b.

Its subcellular location is the mitochondrion inner membrane. Functionally, component of the ubiquinol-cytochrome c reductase complex (complex III or cytochrome b-c1 complex) that is part of the mitochondrial respiratory chain. The b-c1 complex mediates electron transfer from ubiquinol to cytochrome c. Contributes to the generation of a proton gradient across the mitochondrial membrane that is then used for ATP synthesis. The sequence is that of Cytochrome b (MT-CYB) from Dipodomys heermanni (Heermann's kangaroo rat).